The primary structure comprises 428 residues: 3-phosphoshikimate 1-carboxyvinyltransferase (428 aa).

3-phosphoshikimate-binding residues include lysine 22, serine 23, and arginine 27. Lysine 22 contributes to the phosphoenolpyruvate binding site. Residues glycine 95 and arginine 123 each contribute to the phosphoenolpyruvate site. Residues serine 170, serine 171, glutamine 172, serine 197, aspartate 316, and lysine 343 each coordinate 3-phosphoshikimate. Glutamine 172 contacts phosphoenolpyruvate. The active-site Proton acceptor is the aspartate 316. 3 residues coordinate phosphoenolpyruvate: arginine 347, arginine 390, and lysine 414.

The protein belongs to the EPSP synthase family. As to quaternary structure, monomer.

The protein localises to the cytoplasm. The enzyme catalyses 3-phosphoshikimate + phosphoenolpyruvate = 5-O-(1-carboxyvinyl)-3-phosphoshikimate + phosphate. It functions in the pathway metabolic intermediate biosynthesis; chorismate biosynthesis; chorismate from D-erythrose 4-phosphate and phosphoenolpyruvate: step 6/7. Functionally, catalyzes the transfer of the enolpyruvyl moiety of phosphoenolpyruvate (PEP) to the 5-hydroxyl of shikimate-3-phosphate (S3P) to produce enolpyruvyl shikimate-3-phosphate and inorganic phosphate. The chain is 3-phosphoshikimate 1-carboxyvinyltransferase from Laribacter hongkongensis (strain HLHK9).